We begin with the raw amino-acid sequence, 367 residues long: Glutamate 5-kinase (367 aa).

K10 serves as a coordination point for ATP. 3 residues coordinate substrate: S50, D137, and N149. ATP-binding positions include 169 to 170 (TD) and 211 to 217 (TGGMATK). In terms of domain architecture, PUA spans 275–353 (AGEITVDDGA…QQISEILGYE (79 aa)).

It belongs to the glutamate 5-kinase family.

Its subcellular location is the cytoplasm. It catalyses the reaction L-glutamate + ATP = L-glutamyl 5-phosphate + ADP. It participates in amino-acid biosynthesis; L-proline biosynthesis; L-glutamate 5-semialdehyde from L-glutamate: step 1/2. Its function is as follows. Catalyzes the transfer of a phosphate group to glutamate to form L-glutamate 5-phosphate. This Yersinia enterocolitica serotype O:8 / biotype 1B (strain NCTC 13174 / 8081) protein is Glutamate 5-kinase.